A 310-amino-acid polypeptide reads, in one-letter code: Phosphoribosylaminoimidazole-succinocarboxamide synthase (310 aa).

The protein belongs to the SAICAR synthetase family.

The catalysed reaction is 5-amino-1-(5-phospho-D-ribosyl)imidazole-4-carboxylate + L-aspartate + ATP = (2S)-2-[5-amino-1-(5-phospho-beta-D-ribosyl)imidazole-4-carboxamido]succinate + ADP + phosphate + 2 H(+). The protein operates within purine metabolism; IMP biosynthesis via de novo pathway; 5-amino-1-(5-phospho-D-ribosyl)imidazole-4-carboxamide from 5-amino-1-(5-phospho-D-ribosyl)imidazole-4-carboxylate: step 1/2. This chain is Phosphoribosylaminoimidazole-succinocarboxamide synthase, found in Xanthomonas oryzae pv. oryzae (strain MAFF 311018).